The primary structure comprises 133 residues: ATP synthase epsilon chain (133 aa).

Belongs to the ATPase epsilon chain family. F-type ATPases have 2 components, CF(1) - the catalytic core - and CF(0) - the membrane proton channel. CF(1) has five subunits: alpha(3), beta(3), gamma(1), delta(1), epsilon(1). CF(0) has three main subunits: a, b and c.

Its subcellular location is the cell membrane. Functionally, produces ATP from ADP in the presence of a proton gradient across the membrane. In Lawsonia intracellularis (strain PHE/MN1-00), this protein is ATP synthase epsilon chain.